A 303-amino-acid chain; its full sequence is MTQQRTLKNTIRATGVGLHSGDKVYMTLRPAPVDHGVVFRRVDLEPIVEVPADAELVTETTLCTGLSCNGAKIQTVEHLMSALAGLGVDNVIVELSSAELPIMDGSSGPFVFLLQSAGIVEQSKPKRFIRIKQTVEVRDGDKVARFEPYEGYKLGFTIEFNHPMIPAKQSRQEIDFSTSAYVTEISRARTFGFMRDLEYMRERNLGLGGSMDNAIVLDEFRVLNEDGLRYTNEFVRHKILDAIGDLYLAGGAILGAYEGFKSGHALNNKLVRALLADQAAWEWVSFPEGTEQPPVTYASPVYA.

Zn(2+) contacts are provided by histidine 78, histidine 237, and aspartate 241. Histidine 264 serves as the catalytic Proton donor.

This sequence belongs to the LpxC family. Zn(2+) serves as cofactor.

It catalyses the reaction a UDP-3-O-[(3R)-3-hydroxyacyl]-N-acetyl-alpha-D-glucosamine + H2O = a UDP-3-O-[(3R)-3-hydroxyacyl]-alpha-D-glucosamine + acetate. Its pathway is glycolipid biosynthesis; lipid IV(A) biosynthesis; lipid IV(A) from (3R)-3-hydroxytetradecanoyl-[acyl-carrier-protein] and UDP-N-acetyl-alpha-D-glucosamine: step 2/6. In terms of biological role, catalyzes the hydrolysis of UDP-3-O-myristoyl-N-acetylglucosamine to form UDP-3-O-myristoylglucosamine and acetate, the committed step in lipid A biosynthesis. This chain is UDP-3-O-acyl-N-acetylglucosamine deacetylase, found in Xanthomonas oryzae pv. oryzae (strain MAFF 311018).